The sequence spans 87 residues: Tan_10cys (87 aa).

The N-terminal stretch at 1–21 (MNLKVLFLLAMVLVTLCLGED) is a signal peptide. The propeptide occupies 22–27 (RVTDRR).

It belongs to the teretoxin C (TC) superfamily. Post-translationally, contains 5 disulfide bonds. Expressed by the venom duct.

It is found in the secreted. The sequence is that of Tan_10cys from Terebra anilis (Auger snail).